Here is a 379-residue protein sequence, read N- to C-terminus: Cytochrome b (379 aa).

Transmembrane regions (helical) follow at residues L33–M53, W77–I98, W113–L133, and F178–L198. Heme b-binding residues include H83 and H97. 2 residues coordinate heme b: H182 and H196. H201 lines the a ubiquinone pocket. 4 consecutive transmembrane segments (helical) span residues I226 to H246, L288 to H308, I320 to G340, and F347 to P367.

The protein belongs to the cytochrome b family. As to quaternary structure, the cytochrome bc1 complex contains 11 subunits: 3 respiratory subunits (MT-CYB, CYC1 and UQCRFS1), 2 core proteins (UQCRC1 and UQCRC2) and 6 low-molecular weight proteins (UQCRH/QCR6, UQCRB/QCR7, UQCRQ/QCR8, UQCR10/QCR9, UQCR11/QCR10 and a cleavage product of UQCRFS1). This cytochrome bc1 complex then forms a dimer. Heme b serves as cofactor.

It is found in the mitochondrion inner membrane. Its function is as follows. Component of the ubiquinol-cytochrome c reductase complex (complex III or cytochrome b-c1 complex) that is part of the mitochondrial respiratory chain. The b-c1 complex mediates electron transfer from ubiquinol to cytochrome c. Contributes to the generation of a proton gradient across the mitochondrial membrane that is then used for ATP synthesis. The protein is Cytochrome b (MT-CYB) of Bradypus tridactylus (Pale-throated three-toed sloth).